The following is a 206-amino-acid chain: FMN-dependent NADH:quinone oxidoreductase (206 aa).

Residues serine 10, 16 to 18 (SSS), 93 to 96 (MYNF), and 137 to 140 (TRGG) contribute to the FMN site.

The protein belongs to the azoreductase type 1 family. In terms of assembly, homodimer. Requires FMN as cofactor.

The enzyme catalyses 2 a quinone + NADH + H(+) = 2 a 1,4-benzosemiquinone + NAD(+). The catalysed reaction is N,N-dimethyl-1,4-phenylenediamine + anthranilate + 2 NAD(+) = 2-(4-dimethylaminophenyl)diazenylbenzoate + 2 NADH + 2 H(+). Functionally, quinone reductase that provides resistance to thiol-specific stress caused by electrophilic quinones. Also exhibits azoreductase activity. Catalyzes the reductive cleavage of the azo bond in aromatic azo compounds to the corresponding amines. This is FMN-dependent NADH:quinone oxidoreductase from Psychromonas ingrahamii (strain DSM 17664 / CCUG 51855 / 37).